A 217-amino-acid chain; its full sequence is Ribonuclease T (217 aa).

The Exonuclease domain occupies 20–195 (VVVDVETAGF…YDTEKTAELF (176 aa)). The Mg(2+) site is built by Asp-23, Glu-25, His-182, and Asp-187. The active-site Proton donor/acceptor is His-182.

It belongs to the RNase T family. As to quaternary structure, homodimer. Mg(2+) serves as cofactor.

Trims short 3' overhangs of a variety of RNA species, leaving a one or two nucleotide 3' overhang. Responsible for the end-turnover of tRNA: specifically removes the terminal AMP residue from uncharged tRNA (tRNA-C-C-A). Also appears to be involved in tRNA biosynthesis. This chain is Ribonuclease T, found in Vibrio vulnificus (strain YJ016).